Consider the following 106-residue polypeptide: Small ribosomal subunit protein uS10 (106 aa).

Belongs to the universal ribosomal protein uS10 family. As to quaternary structure, part of the 30S ribosomal subunit.

Involved in the binding of tRNA to the ribosomes. The polypeptide is Small ribosomal subunit protein uS10 (Wolbachia sp. subsp. Drosophila simulans (strain wRi)).